We begin with the raw amino-acid sequence, 280 residues long: Undecaprenyl-diphosphatase (280 aa).

The next 8 membrane-spanning stretches (helical) occupy residues 3–23, 45–65, 88–108, 115–135, 150–170, 191–211, 225–245, and 255–275; these read IILL…EFLP, VDLF…YDYW, QLGL…FTFA, LFNP…IFYV, VSLK…IPGT, AEFS…LDFI, VLGI…RLLV, and IFAW…WGFG.

This sequence belongs to the UppP family.

It is found in the cell inner membrane. The enzyme catalyses di-trans,octa-cis-undecaprenyl diphosphate + H2O = di-trans,octa-cis-undecaprenyl phosphate + phosphate + H(+). Catalyzes the dephosphorylation of undecaprenyl diphosphate (UPP). Confers resistance to bacitracin. In Psychrobacter cryohalolentis (strain ATCC BAA-1226 / DSM 17306 / VKM B-2378 / K5), this protein is Undecaprenyl-diphosphatase.